The following is an 85-amino-acid chain: Omega-conotoxin-like Am6.5 (85 aa).

Positions 1–19 are cleaved as a signal peptide; it reads MCILIVAVLFLTAWTFVMA. The propeptide occupies 20 to 53; that stretch reads DDPRDEPDTVVRGGKLFSRARDEMNPAASKLNER. 3 disulfide bridges follow: Cys-55–Cys-73, Cys-62–Cys-77, and Cys-72–Cys-81. At Gln-84 the chain carries Glutamine amide.

Belongs to the conotoxin O1 family. Is not hydroxylated. Expressed by the venom duct.

The protein localises to the secreted. Omega-conotoxins act at presynaptic membranes, they bind and block voltage-gated calcium channels (Cav). This is Omega-conotoxin-like Am6.5 from Conus amadis (Amadis cone).